Reading from the N-terminus, the 509-residue chain is Poly(A) RNA polymerase GLD2-A (509 aa).

A disordered region spans residues 88–107 (PGSPSSSFQNRKRRSDEGNV). 2 residues coordinate Mg(2+): aspartate 240 and aspartate 242. Residues 409-462 (LGDLLLGFLKYFAVEFDWSKDIISVREGKALPRSDDYLWRNKYICVEEPFDGTN) form the PAP-associated domain.

Belongs to the DNA polymerase type-B-like family. GLD2 subfamily. In terms of assembly, component of a complex at least composed of cpeb1, cpsf1, tent2/gld2, pabpc1/ePAB, parn and sympk. Following oocyte maturation, parn is expelled from the complex. Interacts with rbfox2 and sympk. Requires Mg(2+) as cofactor. The cofactor is Mn(2+).

The protein resides in the cytoplasm. It catalyses the reaction RNA(n) + ATP = RNA(n)-3'-adenine ribonucleotide + diphosphate. Functionally, cytoplasmic poly(A) RNA polymerase that adds successive AMP monomers to the 3'-end of specific RNAs, forming a poly(A) tail. In contrast to the canonical nuclear poly(A) RNA polymerase, it only adds poly(A) to selected cytoplasmic mRNAs during oocyte maturation. Plays a central role during oocyte maturation by mediating polyadenylation of dormant mRNAs, which contain 5'AAUAAA-3' sequence in their 3'UTR. In immature oocytes, polyadenylation of poly(A) tails is counteracted by the ribonuclease parn. During maturation parn is excluded from the ribonucleoprotein complex, allowing poly(A) elongation and activation of mRNAs. May not play a role in replication-dependent histone mRNA degradation. The polypeptide is Poly(A) RNA polymerase GLD2-A (tent2-a) (Xenopus laevis (African clawed frog)).